The primary structure comprises 657 residues: Forkhead box protein O3 (657 aa).

Disordered regions lie at residues M1 to A71 and S216 to D320. Residues W142–A236 constitute a DNA-binding region (fork-head). Residues T246–A257 are compositionally biased toward basic residues. A compositionally biased stretch (polar residues) spans D268–R283. Residues S284–S296 show a composition bias toward basic and acidic residues. Over residues R297–G307 the composition is skewed to polar residues.

Dephosphorylation may promote translocation to the nucleus where the protein induces transcription of target genes and triggers apoptosis. As to expression, localized to the animal hemisphere during early cleavage stages. At the late neurula, localized in the anterior neural plate, neural crest cells and in the hatching gland. As development progresses, expression becomes less localized, being observed in a variety of organs and tissues including the head, branchial arches and somites by stage 32.

The protein resides in the cytoplasm. It is found in the cytosol. The protein localises to the nucleus. In terms of biological role, transcriptional activator that recognizes and binds to the DNA sequence 5'-[AG]TAAA[TC]A-3' and regulates different processes, such as apoptosis and autophagy. Acts as a positive regulator of autophagy in skeletal muscle: in starved cells, enters the nucleus following dephosphorylation and binds the promoters of autophagy genes, thereby activating their expression, resulting in proteolysis of skeletal muscle proteins. Triggers apoptosis in the absence of survival factors, including neuronal cell death upon oxidative stress. In response to metabolic stress, translocates into the mitochondria where it promotes mtDNA transcription. Also acts as a key regulator of chondrogenic commitment of skeletal progenitor cells in response to lipid availability: when lipids levels are low, translocates to the nucleus and promotes expression of sox9, which induces chondrogenic commitment and suppresses fatty acid oxidation. Also acts as a key regulator of regulatory T-cells (Treg) differentiation. The protein is Forkhead box protein O3 of Xenopus laevis (African clawed frog).